A 263-amino-acid chain; its full sequence is uncharacterized protein (263 aa).

This is an uncharacterized protein from Archaeoglobus fulgidus (strain ATCC 49558 / DSM 4304 / JCM 9628 / NBRC 100126 / VC-16).